A 396-amino-acid chain; its full sequence is Na(+)/H(+) antiporter NhaA 2 (396 aa).

The next 11 membrane-spanning stretches (helical) occupy residues 17–37 (LSGL…NSDF), 62–82 (LLHW…GLEI), 98–118 (SFPI…YISL), 125–145 (GFGV…MLLG), 154–174 (LFLV…VAIF), 179–199 (LHFE…FLNY), 209–229 (IILG…STIA), 268–288 (FSAF…IIDF), 296–316 (LIVL…IFSF), 337–357 (IFAV…ISHL), and 368–388 (VKLG…VLLI).

Belongs to the NhaA Na(+)/H(+) (TC 2.A.33) antiporter family.

The protein resides in the cell inner membrane. It carries out the reaction Na(+)(in) + 2 H(+)(out) = Na(+)(out) + 2 H(+)(in). In terms of biological role, na(+)/H(+) antiporter that extrudes sodium in exchange for external protons. The protein is Na(+)/H(+) antiporter NhaA 2 of Aliarcobacter butzleri (strain RM4018) (Arcobacter butzleri).